The primary structure comprises 46 residues: Crambin (46 aa).

Intrachain disulfides connect Cys-3–Cys-40, Cys-4–Cys-32, and Cys-16–Cys-26.

It belongs to the plant thionin (TC 1.C.44) family.

It localises to the secreted. In terms of biological role, the function of this hydrophobic plant seed protein is not known. The chain is Crambin (THI2) from Crambe hispanica subsp. abyssinica (Abyssinian kale).